Here is a 241-residue protein sequence, read N- to C-terminus: Cobalt transport protein CbiM (241 aa).

Positions 1-24 are cleaved as a signal peptide; the sequence is MKKIKIISFSVAYLILLTPIYASA. 6 consecutive transmembrane segments (helical) span residues 30–50, 67–87, 99–119, 131–151, 160–180, and 202–222; these read GFLP…FIVG, LLLG…LPSV, LGTI…VLIF, TLGA…YFIF, SLAV…VTSL, and GIFA…TLIV.

The protein belongs to the CbiM family. As to quaternary structure, forms an energy-coupling factor (ECF) transporter complex composed of an ATP-binding protein (A component, CbiO), a transmembrane protein (T component, CbiQ) and 2 possible substrate-capture proteins (S components, CbiM and CbiN) of unknown stoichimetry.

It localises to the cell membrane. It participates in cofactor biosynthesis; adenosylcobalamin biosynthesis. In terms of biological role, part of the energy-coupling factor (ECF) transporter complex CbiMNOQ involved in cobalt import. The polypeptide is Cobalt transport protein CbiM (Acetoanaerobium sticklandii (strain ATCC 12662 / DSM 519 / JCM 1433 / CCUG 9281 / NCIMB 10654 / HF) (Clostridium sticklandii)).